Reading from the N-terminus, the 372-residue chain is Chaperone protein DnaJ (372 aa).

The region spanning 3-68 is the J domain; sequence NLYEILEVNE…EKRKKYDMYG (66 aa). Residues 130–212 form a CR-type zinc finger; it reads GTKKEISYKK…CKGKGYEIER (83 aa). Zn(2+) contacts are provided by Cys-143, Cys-146, Cys-160, Cys-163, Cys-186, Cys-189, Cys-200, and Cys-203. CXXCXGXG motif repeat units lie at residues 143 to 150, 160 to 167, 186 to 193, and 200 to 207; these read CHVCNGDG, CEKCHGTG, CDKCHGEG, and CENCKGKG.

This sequence belongs to the DnaJ family. Homodimer. Requires Zn(2+) as cofactor.

The protein localises to the cytoplasm. Participates actively in the response to hyperosmotic and heat shock by preventing the aggregation of stress-denatured proteins and by disaggregating proteins, also in an autonomous, DnaK-independent fashion. Unfolded proteins bind initially to DnaJ; upon interaction with the DnaJ-bound protein, DnaK hydrolyzes its bound ATP, resulting in the formation of a stable complex. GrpE releases ADP from DnaK; ATP binding to DnaK triggers the release of the substrate protein, thus completing the reaction cycle. Several rounds of ATP-dependent interactions between DnaJ, DnaK and GrpE are required for fully efficient folding. Also involved, together with DnaK and GrpE, in the DNA replication of plasmids through activation of initiation proteins. This Finegoldia magna (strain ATCC 29328 / DSM 20472 / WAL 2508) (Peptostreptococcus magnus) protein is Chaperone protein DnaJ.